Consider the following 284-residue polypeptide: uncharacterized protein (284 aa).

Low complexity-rich tracts occupy residues 110-123 (NGPR…PNNG) and 130-149 (NGPM…NGPN). The tract at residues 110-176 (NGPRGRQMNG…PNEFDSDDDD (67 aa)) is disordered.

The protein resides in the virion. This is an uncharacterized protein from Acanthamoeba polyphaga mimivirus (APMV).